The primary structure comprises 177 residues: Austinoid biosynthesis clusters protein F (177 aa).

This sequence belongs to the trt14 isomerase family. As to quaternary structure, homodimer.

Its pathway is secondary metabolite biosynthesis; terpenoid biosynthesis. In terms of biological role, part of the gene cluster B that mediates the biosynthesis of austinol and dehydroaustinol, two fungal meroterpenoids. The first step of the pathway is the synthesis of 3,5-dimethylorsellinic acid by the polyketide synthase ausA. 3,5-dimethylorsellinic acid is then prenylated by the polyprenyl transferase ausN. Further epoxidation by the FAD-dependent monooxygenase ausM and cyclization by the probable terpene cyclase ausL lead to the formation of protoaustinoid A. Protoaustinoid A is then oxidized to spiro-lactone preaustinoid A3 by the combined action of the FAD-binding monooxygenases ausB and ausC, and the dioxygenase ausE. Acid-catalyzed keto-rearrangement and ring contraction of the tetraketide portion of preaustinoid A3 by ausJ lead to the formation of preaustinoid A4. The aldo-keto reductase ausK, with the help of ausH, is involved in the next step by transforming preaustinoid A4 into isoaustinone which is in turn hydroxylated by the P450 monooxygenase ausI to form austinolide. Finally, the cytochrome P450 monooxygenase ausG modifies austinolide to austinol. Austinol can be further modified to dehydroaustinol which forms a diffusible complex with diorcinol that initiates conidiation. Due to genetic rearrangements of the clusters and the subsequent loss of some enzymes, the end products of the Emericella nidulans austinoid biosynthesis clusters are austinol and dehydroaustinol, even if additional enzymes, such as the O-acetyltransferase ausQ and the cytochrome P450 monooxygenase ausR are still functional. The sequence is that of Austinoid biosynthesis clusters protein F from Emericella nidulans (strain FGSC A4 / ATCC 38163 / CBS 112.46 / NRRL 194 / M139) (Aspergillus nidulans).